Consider the following 364-residue polypeptide: tRNA (adenine(58)-N(1))-methyltransferase catalytic subunit trm61 (364 aa).

S-adenosyl-L-methionine contacts are provided by residues 114–116 (SAS), Glu135, Arg140, 167–168 (DV), and Asp186. Residues 280 to 309 (EQNLSSDAKVEDQDNDSMLGENKSSVSTET) form a disordered region.

The protein belongs to the class I-like SAM-binding methyltransferase superfamily. TRM61 family. In terms of assembly, heterotetramer; composed of two copies of TRM6 and two copies of TRM61.

The protein resides in the nucleus. The enzyme catalyses adenosine(58) in tRNA + S-adenosyl-L-methionine = N(1)-methyladenosine(58) in tRNA + S-adenosyl-L-homocysteine + H(+). Functionally, catalytic subunit of tRNA (adenine-N(1)-)-methyltransferase, which catalyzes the formation of N(1)-methyladenine at position 58 (m1A58) in initiator methionyl-tRNA. The polypeptide is tRNA (adenine(58)-N(1))-methyltransferase catalytic subunit trm61 (cpd1) (Schizosaccharomyces pombe (strain 972 / ATCC 24843) (Fission yeast)).